A 278-amino-acid polypeptide reads, in one-letter code: MQIMLCAISNIASGNCSEDCKYCTQSAHVKTDIQKYRRKELSQIVLEAKMAKKNEALGFCLVTAGLGLDDEKLEYVCEAAKAVQKEAPNLLLIACNGMASVEQLKELKKAGIFSYNHNLESSKEFFPQICTTHTWESRFQTNLNAKEAGLMLCCGGIYGMGESEEDRLSFRKSLQELQPFSTPINFFIANENLKLQVPRLSVDEALKIVRDTKEALPQSVVMVAGGREVVLRERQYEIFQAGAGAIVIGDYLTTKGEEPSQDIIKLKEMGFTFASECH.

Residues 1 to 227 (MQIMLCAISN…QSVVMVAGGR (227 aa)) form the Radical SAM core domain. [4Fe-4S] cluster-binding residues include Cys-16, Cys-20, and Cys-23. The [2Fe-2S] cluster site is built by Cys-60, Cys-95, and Cys-153.

The protein belongs to the radical SAM superfamily. Biotin synthase family. In terms of assembly, homodimer. [4Fe-4S] cluster serves as cofactor. It depends on [2Fe-2S] cluster as a cofactor.

It carries out the reaction (4R,5S)-dethiobiotin + (sulfur carrier)-SH + 2 reduced [2Fe-2S]-[ferredoxin] + 2 S-adenosyl-L-methionine = (sulfur carrier)-H + biotin + 2 5'-deoxyadenosine + 2 L-methionine + 2 oxidized [2Fe-2S]-[ferredoxin]. Its pathway is cofactor biosynthesis; biotin biosynthesis; biotin from 7,8-diaminononanoate: step 2/2. Its function is as follows. Catalyzes the conversion of dethiobiotin (DTB) to biotin by the insertion of a sulfur atom into dethiobiotin via a radical-based mechanism. The polypeptide is Biotin synthase (Campylobacter jejuni (strain RM1221)).